Consider the following 103-residue polypeptide: Putative defensin-like protein 305 (103 aa).

Residues 1–31 (MREEILEIFLLVNFVFILCTSIMVRIRYVSC) form the signal peptide. Intrachain disulfides connect C31/C51, C37/C56, and C42/C58.

It belongs to the DEFL family.

The protein resides in the secreted. This is Putative defensin-like protein 305 from Arabidopsis thaliana (Mouse-ear cress).